Consider the following 396-residue polypeptide: Phosphoglycerate kinase (396 aa).

Substrate contacts are provided by residues 21-23 (DFN), R36, 59-62 (HLGR), R118, and R151. ATP is bound by residues K201, G292, E323, and 349-352 (GGDS).

Belongs to the phosphoglycerate kinase family. As to quaternary structure, monomer.

The protein localises to the cytoplasm. The catalysed reaction is (2R)-3-phosphoglycerate + ATP = (2R)-3-phospho-glyceroyl phosphate + ADP. It functions in the pathway carbohydrate degradation; glycolysis; pyruvate from D-glyceraldehyde 3-phosphate: step 2/5. The chain is Phosphoglycerate kinase from Leptospira interrogans serogroup Icterohaemorrhagiae serovar Lai (strain 56601).